The primary structure comprises 55 residues: Mitochondrial import receptor subunit TOM7 homolog (55 aa).

At 1-20 (MVKLSKEAKQRLQQLFKGSQ) the chain is on the cytoplasmic side. The helical transmembrane segment at 21-36 (FAIRWGFIPLVIYLGF) threads the bilayer. Over 37–55 (KRGADPGMPEPTVLSLLWG) the chain is Mitochondrial intermembrane.

It belongs to the Tom7 family. In terms of assembly, forms part of the preprotein translocase complex of the outer mitochondrial membrane (TOM complex) which consists of at least 7 different proteins (TOMM5, TOMM6, TOMM7, TOMM20, TOMM22, TOMM40 and TOMM70).

The protein resides in the mitochondrion outer membrane. Required for assembly and stability of the TOM complex. Positive regulator of PRKN translocation to damaged mitochondria. Acts probably by stabilizing PINK1 on the outer membrane of depolarized mitochondria. The sequence is that of Mitochondrial import receptor subunit TOM7 homolog (TOMM7) from Homo sapiens (Human).